Consider the following 182-residue polypeptide: Troponin I, fast skeletal muscle (182 aa).

N-acetylglycine is present on Gly-2. Positions 2–48 (GDEEKRNRAITARRQHLKSVMLQIAATELEKEESRRESEKQNYLSEH) are involved in binding TNC. Thr-12 carries the post-translational modification Phosphothreonine. Basic and acidic residues predominate over residues 29–41 (ELEKEESRRESEK). Positions 29–53 (ELEKEESRRESEKQNYLSEHCPPLH) are disordered. Residues 97-117 (NQKLFDLRGKFKRPPLRRVRM) are involved in binding TNC and actin. Position 118 is a phosphoserine (Ser-118).

It belongs to the troponin I family. As to quaternary structure, binds to actin and tropomyosin.

Troponin I is the inhibitory subunit of troponin, the thin filament regulatory complex which confers calcium-sensitivity to striated muscle actomyosin ATPase activity. In Rattus norvegicus (Rat), this protein is Troponin I, fast skeletal muscle (Tnni2).